A 374-amino-acid polypeptide reads, in one-letter code: Pulmonary surfactant-associated protein D (374 aa).

Residues 1 to 19 (MLPFLSMLVLLVQPLGNLG) form the signal peptide. S-nitrosocysteine is present on residues C34 and C39. The segment at 38-222 (MCSPTENGLP…GIKGESGLPD (185 aa)) is disordered. Residues 45–221 (GLPGRDGRDG…RGIKGESGLP (177 aa)) form the Collagen-like domain. A compositionally biased stretch (basic and acidic residues) spans 49 to 64 (RDGRDGREGPRGEKGD). The span at 70–79 (PMGLSGLQGP) shows a compositional bias: low complexity. N89 is a glycosylation site (N-linked (GlcNAc...) asparagine). Low complexity-rich tracts occupy residues 137–149 (KGEA…VGAP) and 169–200 (APGV…RGPP). A compositionally biased stretch (basic and acidic residues) spans 203–215 (KGDRGVPGDRGIK). Residues 222–253 (DSAALRQQMEALKGKLQRLEVAFSHYQKAALF) adopt a coiled-coil conformation. Residues 259-374 (VGDKIFRTAD…GEQRLVICEF (116 aa)) form the C-type lectin domain. Disulfide bonds link C280/C372 and C350/C364.

The protein belongs to the SFTPD family. As to quaternary structure, oligomeric complex of 4 set of homotrimers. In terms of processing, S-nitrosylation at Cys-34 and Cys-39 alters the quaternary structure which results in a pro-inflammatory chemoattractive signaling activity with macrophages.

It localises to the secreted. The protein localises to the extracellular space. Its subcellular location is the extracellular matrix. It is found in the surface film. Functionally, contributes to the lung's defense against inhaled microorganisms, organic antigens and toxins. Interacts with compounds such as bacterial lipopolysaccharides, oligosaccharides and fatty acids and modulates leukocyte action in immune response. May participate in the extracellular reorganization or turnover of pulmonary surfactant. Binds strongly maltose residues and to a lesser extent other alpha-glucosyl moieties. The sequence is that of Pulmonary surfactant-associated protein D (Sftpd) from Mus musculus (Mouse).